A 156-amino-acid chain; its full sequence is Cyclic pyranopterin monophosphate synthase (156 aa).

Substrate-binding positions include 75–77 (LCH) and 111–112 (ME). Residue D126 is part of the active site.

The protein belongs to the MoaC family. Homohexamer; trimer of dimers.

The catalysed reaction is (8S)-3',8-cyclo-7,8-dihydroguanosine 5'-triphosphate = cyclic pyranopterin phosphate + diphosphate. The protein operates within cofactor biosynthesis; molybdopterin biosynthesis. Its function is as follows. Catalyzes the conversion of (8S)-3',8-cyclo-7,8-dihydroguanosine 5'-triphosphate to cyclic pyranopterin monophosphate (cPMP). This is Cyclic pyranopterin monophosphate synthase from Caulobacter sp. (strain K31).